Consider the following 933-residue polypeptide: DNA repair-scaffolding protein (933 aa).

Disordered stretches follow at residues 1-34, 67-174, and 205-224; these read MSGA…LRRG, SEKT…KGTL, and YSSD…IDSE. Composition is skewed to basic and acidic residues over residues 16 to 29, 71 to 87, and 119 to 132; these read WHIE…ERSQ, GITE…KTET, and RDGR…RLGD. Acidic residues predominate over residues 138–148; that stretch reads PEDEDIEDELQ. The necessary for interaction with RAD51 stretch occupies residues 175–469; the sequence is DISDCDSCAS…GTGWTHGHEK (295 aa). The segment covering 214 to 224 has biased composition (basic and acidic residues); sequence DPEHSLFIDSE.

As to quaternary structure, found in a complex, at least composed of BLM, RAD51 and SPIDR; the complex formation is mediated by SPIDR. Interacts (via C-terminal region) with BLM; the interaction is direct. Interacts with RAD51; the interaction is direct. Interacts (via the C-terminal region) with FIGNL1 (via N-terminal one-half region); the interaction is direct.

It is found in the nucleus. In terms of biological role, plays a role in DNA double-strand break (DBS) repair via homologous recombination (HR). Serves as a scaffolding protein that helps to promote the recruitment of DNA-processing enzymes like the helicase BLM and recombinase RAD51 to site of DNA damage, and hence contributes to maintain genomic integrity. In Mus musculus (Mouse), this protein is DNA repair-scaffolding protein (Spidr).